A 95-amino-acid polypeptide reads, in one-letter code: Large ribosomal subunit protein uL23 (95 aa).

Belongs to the universal ribosomal protein uL23 family. As to quaternary structure, part of the 50S ribosomal subunit. Contacts protein L29, and trigger factor when it is bound to the ribosome.

Functionally, one of the early assembly proteins it binds 23S rRNA. One of the proteins that surrounds the polypeptide exit tunnel on the outside of the ribosome. Forms the main docking site for trigger factor binding to the ribosome. The polypeptide is Large ribosomal subunit protein uL23 (Geobacillus thermodenitrificans (strain NG80-2)).